A 108-amino-acid chain; its full sequence is MDSFQFLSVEQAYQFWVSQSAILVDVRDPQSYRLGHATGAFHLTNDTLNQFLQDADFDVPVMVMCYHGHSSQGAAQYLVNMGFETVYSINGGFEAWLREFPQAITSLQ.

The Rhodanese domain maps to 17–105 (VSQSAILVDV…WLREFPQAIT (89 aa)). Residue C65 is the Cysteine persulfide intermediate of the active site.

It belongs to the GlpE family.

The protein localises to the cytoplasm. The catalysed reaction is thiosulfate + hydrogen cyanide = thiocyanate + sulfite + 2 H(+). It catalyses the reaction thiosulfate + [thioredoxin]-dithiol = [thioredoxin]-disulfide + hydrogen sulfide + sulfite + 2 H(+). Functionally, transferase that catalyzes the transfer of sulfur from thiosulfate to thiophilic acceptors such as cyanide or dithiols. May function in a CysM-independent thiosulfate assimilation pathway by catalyzing the conversion of thiosulfate to sulfite, which can then be used for L-cysteine biosynthesis. This Proteus mirabilis (strain HI4320) protein is Thiosulfate sulfurtransferase GlpE.